The following is a 143-amino-acid chain: Large ribosomal subunit protein uL11 (143 aa).

It belongs to the universal ribosomal protein uL11 family. As to quaternary structure, part of the ribosomal stalk of the 50S ribosomal subunit. Interacts with L10 and the large rRNA to form the base of the stalk. L10 forms an elongated spine to which L12 dimers bind in a sequential fashion forming a multimeric L10(L12)X complex. One or more lysine residues are methylated.

Its function is as follows. Forms part of the ribosomal stalk which helps the ribosome interact with GTP-bound translation factors. This chain is Large ribosomal subunit protein uL11, found in Pseudomonas putida (strain ATCC 700007 / DSM 6899 / JCM 31910 / BCRC 17059 / LMG 24140 / F1).